Reading from the N-terminus, the 366-residue chain is Chalcone synthase B (366 aa).

Cys172 is an active-site residue.

This sequence belongs to the thiolase-like superfamily. Chalcone/stilbene synthases family.

It catalyses the reaction (E)-4-coumaroyl-CoA + 3 malonyl-CoA + 3 H(+) = 2',4,4',6'-tetrahydroxychalcone + 3 CO2 + 4 CoA. Its pathway is secondary metabolite biosynthesis; flavonoid biosynthesis. The primary product of this enzyme is 4,2',4',6'-tetrahydroxychalcone (also termed naringenin-chalcone or chalcone) which can under specific conditions spontaneously isomerize into naringenin. The protein is Chalcone synthase B (CHSB) of Ipomoea triloba (Trilobed morning glory).